A 456-amino-acid chain; its full sequence is tRNA-2-methylthio-N(6)-dimethylallyladenosine synthase (456 aa).

Residues 1 to 116 (MTYFFETYGC…FESIFQEIEQ (116 aa)) enclose the MTTase N-terminal domain. [4Fe-4S] cluster contacts are provided by C10, C46, C79, C162, C166, and C169. A Radical SAM core domain is found at 148 to 384 (SEGSFQSFIP…IALQMSTTLK (237 aa)). Residues 387–452 (RARVGKTLPV…GRTLRAHLVQ (66 aa)) enclose the TRAM domain.

The protein belongs to the methylthiotransferase family. MiaB subfamily. Monomer. Requires [4Fe-4S] cluster as cofactor.

The protein resides in the cytoplasm. The catalysed reaction is N(6)-dimethylallyladenosine(37) in tRNA + (sulfur carrier)-SH + AH2 + 2 S-adenosyl-L-methionine = 2-methylsulfanyl-N(6)-dimethylallyladenosine(37) in tRNA + (sulfur carrier)-H + 5'-deoxyadenosine + L-methionine + A + S-adenosyl-L-homocysteine + 2 H(+). Functionally, catalyzes the methylthiolation of N6-(dimethylallyl)adenosine (i(6)A), leading to the formation of 2-methylthio-N6-(dimethylallyl)adenosine (ms(2)i(6)A) at position 37 in tRNAs that read codons beginning with uridine. The chain is tRNA-2-methylthio-N(6)-dimethylallyladenosine synthase from Treponema pallidum (strain Nichols).